A 294-amino-acid polypeptide reads, in one-letter code: Acetylglutamate kinase (294 aa).

Substrate-binding positions include 47 to 48, arginine 69, and asparagine 168; that span reads GG.

This sequence belongs to the acetylglutamate kinase family. ArgB subfamily.

It is found in the cytoplasm. The enzyme catalyses N-acetyl-L-glutamate + ATP = N-acetyl-L-glutamyl 5-phosphate + ADP. The protein operates within amino-acid biosynthesis; L-arginine biosynthesis; N(2)-acetyl-L-ornithine from L-glutamate: step 2/4. In terms of biological role, catalyzes the ATP-dependent phosphorylation of N-acetyl-L-glutamate. The chain is Acetylglutamate kinase from Corynebacterium glutamicum (strain ATCC 13032 / DSM 20300 / JCM 1318 / BCRC 11384 / CCUG 27702 / LMG 3730 / NBRC 12168 / NCIMB 10025 / NRRL B-2784 / 534).